The primary structure comprises 229 residues: Leucyl/phenylalanyl-tRNA--protein transferase (229 aa).

Belongs to the L/F-transferase family.

The protein resides in the cytoplasm. It carries out the reaction N-terminal L-lysyl-[protein] + L-leucyl-tRNA(Leu) = N-terminal L-leucyl-L-lysyl-[protein] + tRNA(Leu) + H(+). It catalyses the reaction N-terminal L-arginyl-[protein] + L-leucyl-tRNA(Leu) = N-terminal L-leucyl-L-arginyl-[protein] + tRNA(Leu) + H(+). The enzyme catalyses L-phenylalanyl-tRNA(Phe) + an N-terminal L-alpha-aminoacyl-[protein] = an N-terminal L-phenylalanyl-L-alpha-aminoacyl-[protein] + tRNA(Phe). Its function is as follows. Functions in the N-end rule pathway of protein degradation where it conjugates Leu, Phe and, less efficiently, Met from aminoacyl-tRNAs to the N-termini of proteins containing an N-terminal arginine or lysine. The chain is Leucyl/phenylalanyl-tRNA--protein transferase from Pseudomonas syringae pv. syringae (strain B728a).